The following is a 116-amino-acid chain: Type IV narrow pilus major component PilA5 (116 aa).

Residues 1–5 constitute a propeptide, leader sequence; it reads MRAKG. Phe6 is modified (N-methylphenylalanine). A helical transmembrane segment spans residues 6 to 26; that stretch reads FTLIELAIVIVIIGILVAIAV.

Post-translationally, glycosylated.

The protein resides in the cell inner membrane. The protein localises to the cell outer membrane. Its subcellular location is the periplasm. Plays an essential role in forming the main structure of the narrow T4P pili that participates in twitching motility. The chain is Type IV narrow pilus major component PilA5 (pilA5) from Thermus thermophilus (strain ATCC BAA-163 / DSM 7039 / HB27).